A 344-amino-acid chain; its full sequence is GTPase Obg (344 aa).

Residues 1–159 form the Obg domain; it reads MKFLDLAKVY…RTIWLRLKLI (159 aa). An OBG-type G domain is found at 160 to 326; the sequence is ADVGLLGLPN…VLRVLRARVD (167 aa). GTP is bound by residues 166–173, 191–195, 212–215, 279–282, and 307–309; these read GLPNAGKS, FTTLV, DIPG, NKID, and SGV. The Mg(2+) site is built by serine 173 and threonine 193.

The protein belongs to the TRAFAC class OBG-HflX-like GTPase superfamily. OBG GTPase family. In terms of assembly, monomer. Mg(2+) serves as cofactor.

It localises to the cytoplasm. In terms of biological role, an essential GTPase which binds GTP, GDP and possibly (p)ppGpp with moderate affinity, with high nucleotide exchange rates and a fairly low GTP hydrolysis rate. Plays a role in control of the cell cycle, stress response, ribosome biogenesis and in those bacteria that undergo differentiation, in morphogenesis control. The sequence is that of GTPase Obg from Jannaschia sp. (strain CCS1).